Consider the following 1222-residue polypeptide: ATP-dependent helicase/nuclease subunit A (1222 aa).

A UvrD-like helicase ATP-binding domain is found at 39–495; it reads QKRTAQQIEA…ILLKENFRSQ (457 aa). ATP is bound at residue 60-67; the sequence is ASAGSGKT. In terms of domain architecture, UvrD-like helicase C-terminal spans 524–810; that stretch reads QLIAGSHAQT…NLMTIHKSKG (287 aa).

The protein belongs to the helicase family. AddA subfamily. In terms of assembly, heterodimer of AddA and AddB/RexB. Mg(2+) is required as a cofactor.

It carries out the reaction Couples ATP hydrolysis with the unwinding of duplex DNA by translocating in the 3'-5' direction.. The enzyme catalyses ATP + H2O = ADP + phosphate + H(+). Its function is as follows. The heterodimer acts as both an ATP-dependent DNA helicase and an ATP-dependent, dual-direction single-stranded exonuclease. Recognizes the chi site generating a DNA molecule suitable for the initiation of homologous recombination. The AddA nuclease domain is required for chi fragment generation; this subunit has the helicase and 3' -&gt; 5' nuclease activities. This is ATP-dependent helicase/nuclease subunit A from Streptococcus pyogenes serotype M12 (strain MGAS2096).